Reading from the N-terminus, the 399-residue chain is Galactokinase (399 aa).

A substrate-binding site is contributed by 42 to 45 (EHTD). Residues S76 and 133–139 (ASGLSSS) each bind ATP. Residues S139 and E171 each coordinate Mg(2+). D183 serves as the catalytic Proton acceptor. Y233 provides a ligand contact to substrate.

It belongs to the GHMP kinase family. GalK subfamily.

It is found in the cytoplasm. The enzyme catalyses alpha-D-galactose + ATP = alpha-D-galactose 1-phosphate + ADP + H(+). The protein operates within carbohydrate metabolism; galactose metabolism. In terms of biological role, catalyzes the transfer of the gamma-phosphate of ATP to D-galactose to form alpha-D-galactose-1-phosphate (Gal-1-P). The polypeptide is Galactokinase (Lactococcus lactis subsp. cremoris (strain MG1363)).